Reading from the N-terminus, the 424-residue chain is Zinc finger protein 597 (424 aa).

One can recognise a KRAB domain in the interval 14–88 (ILFEDLAVYF…KYPIAAPLVP (75 aa)). C2H2-type zinc fingers lie at residues 156–178 (YKCP…QKIH), 184–206 (HKCG…RRIH), 212–234 (YKCA…MNSH), and 240–262 (YTCS…QKSH). Residue Lys300 forms a Glycyl lysine isopeptide (Lys-Gly) (interchain with G-Cter in SUMO2) linkage. 3 C2H2-type zinc fingers span residues 341-363 (LQCP…QNIH), 369-391 (HKCK…QKSH), and 397-419 (FKCT…KRTH).

This sequence belongs to the krueppel C2H2-type zinc-finger protein family.

The protein resides in the nucleus. Functionally, may be involved in transcriptional regulation. This is Zinc finger protein 597 (ZNF597) from Homo sapiens (Human).